A 279-amino-acid chain; its full sequence is Presqualene diphosphate synthase (279 aa).

It belongs to the phytoene/squalene synthase family. HpnD subfamily.

The catalysed reaction is 2 (2E,6E)-farnesyl diphosphate = presqualene diphosphate + diphosphate. It participates in secondary metabolite biosynthesis; hopanoid biosynthesis. Its function is as follows. Involved in the biosynthesis of the hopanoid precursor squalene (SQ) from farnesyl diphosphate (FPP). Catalyzes the first step, the formation of presqualene diphosphate (PSPP) from two molecules of FPP. This Sinorhizobium fredii (strain NBRC 101917 / NGR234) protein is Presqualene diphosphate synthase.